We begin with the raw amino-acid sequence, 235 residues long: 2-C-methyl-D-erythritol 4-phosphate cytidylyltransferase (235 aa).

Belongs to the IspD/TarI cytidylyltransferase family. IspD subfamily. Homodimer.

It catalyses the reaction 2-C-methyl-D-erythritol 4-phosphate + CTP + H(+) = 4-CDP-2-C-methyl-D-erythritol + diphosphate. The protein operates within isoprenoid biosynthesis; isopentenyl diphosphate biosynthesis via DXP pathway; isopentenyl diphosphate from 1-deoxy-D-xylulose 5-phosphate: step 2/6. Catalyzes the formation of 4-diphosphocytidyl-2-C-methyl-D-erythritol from CTP and 2-C-methyl-D-erythritol 4-phosphate (MEP). This is 2-C-methyl-D-erythritol 4-phosphate cytidylyltransferase from Blochmanniella pennsylvanica (strain BPEN).